We begin with the raw amino-acid sequence, 293 residues long: uncharacterized protein (293 aa).

A helical transmembrane segment spans residues Ile-55–Ala-77.

It localises to the membrane. This is an uncharacterized protein from Caenorhabditis elegans.